Here is a 906-residue protein sequence, read N- to C-terminus: Coatomer subunit beta' (906 aa).

WD repeat units lie at residues 13–52 (ARSD…LVKT), 55–94 (VCDL…RVHM), 97–136 (AHSD…SCSQ), 140–180 (GHTH…PNFT), 183–224 (GHEK…CVQT), 227–266 (GHAQ…LEST), 350–388 (SCEI…NKSF), and 390–425 (SAQE…KSFK). N6-acetyllysine is present on K627. The stretch at 746–783 (IRTGRLPEAAFLARTYLPSQVSRVVKLWRENLSKVNQK) is one WD 9 repeat. Residues 837 to 872 (EEAKGFQPSRSAAQQELDGKPASPTPVIVTSQTANK) form a disordered region. A Phosphoserine modification is found at S859. Residue T861 is modified to Phosphothreonine. Residues 866–891 (TSQTANKEEKSLLELEVDLDNLEIED) adopt a coiled-coil conformation.

Belongs to the WD repeat COPB2 family. Oligomeric complex that consists of at least the alpha, beta, beta', gamma, delta, epsilon and zeta subunits. Probably interacts with PEX11A. Interacts with SCYL1. Interacts with JAGN1.

The protein localises to the cytoplasm. It localises to the cytosol. Its subcellular location is the golgi apparatus membrane. The protein resides in the cytoplasmic vesicle. It is found in the COPI-coated vesicle membrane. Its function is as follows. The coatomer is a cytosolic protein complex that binds to dilysine motifs and reversibly associates with Golgi non-clathrin-coated vesicles, which further mediate biosynthetic protein transport from the ER, via the Golgi up to the trans Golgi network. Coatomer complex is required for budding from Golgi membranes, and is essential for the retrograde Golgi-to-ER transport of dilysine-tagged proteins. In mammals, the coatomer can only be recruited by membranes associated to ADP-ribosylation factors (ARFs), which are small GTP-binding proteins; the complex also influences the Golgi structural integrity, as well as the processing, activity, and endocytic recycling of LDL receptors. Functionally, this coatomer complex protein, essential for Golgi budding and vesicular trafficking, is a selective binding protein (RACK) for protein kinase C, epsilon type. It binds to Golgi membranes in a GTP-dependent manner. The polypeptide is Coatomer subunit beta' (COPB2) (Bos taurus (Bovine)).